The chain runs to 437 residues: Adenylosuccinate synthetase (437 aa).

GTP-binding positions include 12-18 and 40-42; these read GDEGKGK and GHT. The active-site Proton acceptor is Asp13. Residues Asp13 and Gly40 each coordinate Mg(2+). IMP-binding positions include 13–16, 38–41, Thr128, Arg142, Gln223, Thr238, and Arg302; these read DEGK and NAGH. Catalysis depends on His41, which acts as the Proton donor. 298–304 is a substrate binding site; it reads TTTGRKR. GTP contacts are provided by residues Arg304, 330–332, and 412–414; these read KLD and SLG.

Belongs to the adenylosuccinate synthetase family. As to quaternary structure, homodimer. Mg(2+) is required as a cofactor.

It is found in the cytoplasm. It carries out the reaction IMP + L-aspartate + GTP = N(6)-(1,2-dicarboxyethyl)-AMP + GDP + phosphate + 2 H(+). It participates in purine metabolism; AMP biosynthesis via de novo pathway; AMP from IMP: step 1/2. Its function is as follows. Plays an important role in the de novo pathway of purine nucleotide biosynthesis. Catalyzes the first committed step in the biosynthesis of AMP from IMP. This is Adenylosuccinate synthetase from Trichodesmium erythraeum (strain IMS101).